The sequence spans 103 residues: Large ribosomal subunit protein eL21 (103 aa).

Belongs to the eukaryotic ribosomal protein eL21 family.

In Sulfolobus acidocaldarius (strain ATCC 33909 / DSM 639 / JCM 8929 / NBRC 15157 / NCIMB 11770), this protein is Large ribosomal subunit protein eL21.